The sequence spans 421 residues: Testin (421 aa).

A PET domain is found at 92–199 (MILTNPVAAK…GDVKLPCEMD (108 aa)). Residues 133–164 (EKQPVAGSEGAQYRKKQLAKQLPAHDQDPSKC) form a disordered region. The segment covering 155–164 (PAHDQDPSKC) has biased composition (basic and acidic residues). LIM zinc-binding domains lie at 234 to 297 (YSCY…CDSE), 299 to 359 (PRCA…NHAV), and 362 to 421 (QGCH…KMMS).

The protein belongs to the prickle / espinas / testin family. In terms of assembly, interacts via LIM domain 1 with ZYX. Interacts (via LIM domain 3) with ENAH and VASP. Interacts with ALKBH4, talin, actin, alpha-actinin, GRIP1 and PXN. Interacts (via LIM domain 2) with ACTL7A (via N-terminus). Heterodimer with ACTL7A; the heterodimer interacts with ENAH to form a heterotrimer.

Its subcellular location is the cytoplasm. It is found in the cell junction. It localises to the focal adhesion. Functionally, scaffold protein that may play a role in cell adhesion, cell spreading and in the reorganization of the actin cytoskeleton. Plays a role in the regulation of cell proliferation. May act as a tumor suppressor. This Ateles geoffroyi (Black-handed spider monkey) protein is Testin (TES).